Consider the following 78-residue polypeptide: Small ribosomal subunit protein bS20 (78 aa).

It belongs to the bacterial ribosomal protein bS20 family.

Functionally, binds directly to 16S ribosomal RNA. The chain is Small ribosomal subunit protein bS20 from Streptococcus pneumoniae serotype 2 (strain D39 / NCTC 7466).